Here is a 268-residue protein sequence, read N- to C-terminus: Dioscorin DB3S (268 aa).

Residues 25-259 (DEFSYIEGNP…TNFRSVFYFE (235 aa)) form the Alpha-carbonic anhydrase domain. C50 and C209 are oxidised to a cystine. H91 (proton acceptor) is an active-site residue. Residues D92, 117 to 119 (HFH), Q136, and 205 to 206 (TA) contribute to the L-ascorbate site.

The protein belongs to the alpha-class carbonic anhydrase family. Monomer. Homodimer. In terms of processing, not glycosylated. In terms of tissue distribution, expressed in tuber (at protein level).

It carries out the reaction hydrogencarbonate + H(+) = CO2 + H2O. The enzyme catalyses 2 monodehydro-L-ascorbate radical + NADH + H(+) = 2 L-ascorbate + NAD(+). Functionally, storage protein of tuber. Involved in protection against oxidative stress. Has carbonate dehydratase and weak trypsin inhibitor activity detected by measuring the dehydration of sodium bicarbonate and the inhibition of trypsin-catalyzed hydrolysis of N-benzoyl-L-arginine-4-nitro anilide, respectively. Contrarily, no carbonate dehydratase or trypsin inhibitor activity detected by measuring the hydrolysis of 4-nitrophenyl acetate or the inhibition of bovine trypsin-catalyzed hydrolysis of N-benzoyl-L-arginine ethyl ester, respectively. Has dehydroascorbate (DHA) reductase and monodehydroascorbate (MDA) reductase activities. Catalyzes the reactions of carbonate dehydratase and DHA reductase independently of zinc and glutathione (GSH). The coupled reaction is capable of recycling a plant antioxidant ascorbate using ubiquitous compounds H(2)O and CO(2). Exhibits antioxidant activity. Able to scavenge 1,1-diphenyl-2-picrylhydrazyl (DPPH) radical and hydroxyl radicals. Exhibits immunomodulatory activity. Activates Toll-like receptor 4 signaling pathways by up-regulating the gene expression of pro-inflammatory cytokines, such as tumor necrosis factor alpha, interleukin-1 beta and interleukin-6, and chemokines RANTES and MCP-1, in mouse RAW 264.7 macrophages. Stimulates the phagocytosis of E.coli by the LPS-treated mouse macrophages. This Dioscorea polystachya (Chinese yam) protein is Dioscorin DB3S.